The primary structure comprises 355 residues: Putative beta-lactamase HcpE (355 aa).

An N-terminal signal peptide occupies residues 1 to 22 (MGVKFLKILVCGLFFWSLNAHL). TPR repeat units lie at residues 27-60 (DNSF…GVSE), 63-96 (TQLG…DDRE), 98-131 (CFGL…LKHP), 132-166 (ESCY…DMAK), 202-240 (GQAC…NNSG), 245-275 (LGSM…MGSA), 276-311 (VSCS…MGDE), and 312-344 (VGCF…GMKQ). 9 cysteine pairs are disulfide-bonded: cysteine 54/cysteine 62, cysteine 90/cysteine 98, cysteine 126/cysteine 134, cysteine 160/cysteine 168, cysteine 197/cysteine 205, cysteine 234/cysteine 242, cysteine 270/cysteine 278, cysteine 306/cysteine 314, and cysteine 338/cysteine 346.

Belongs to the hcp beta-lactamase family.

The protein localises to the secreted. The enzyme catalyses a beta-lactam + H2O = a substituted beta-amino acid. May hydrolyze 6-aminopenicillinic acid and 7-aminocephalosporanic acid (ACA) derivatives. The polypeptide is Putative beta-lactamase HcpE (hcpE) (Helicobacter pylori (strain ATCC 700392 / 26695) (Campylobacter pylori)).